Here is a 200-residue protein sequence, read N- to C-terminus: Recombination protein RecR (200 aa).

The C4-type zinc-finger motif lies at Cys-60–Cys-75. The 95-residue stretch at Thr-83–Pro-177 folds into the Toprim domain.

It belongs to the RecR family.

May play a role in DNA repair. It seems to be involved in an RecBC-independent recombinational process of DNA repair. It may act with RecF and RecO. The protein is Recombination protein RecR of Francisella tularensis subsp. novicida (strain U112).